Here is a 326-residue protein sequence, read N- to C-terminus: Phospho-N-acetylmuramoyl-pentapeptide-transferase (326 aa).

The next 9 helical transmembrane spans lie at 3 to 23, 51 to 71, 79 to 99, 115 to 135, 138 to 158, 169 to 189, 195 to 215, 221 to 243, and 306 to 326; these read ISIS…PAFI, TMGG…FALF, VGMI…DDFL, LALQ…GGDI, VFGY…FWLV, GVDG…GVIA, MDIL…FIFN, VFMG…MALH, and FFFW…LYLM.

The protein belongs to the glycosyltransferase 4 family. MraY subfamily. The cofactor is Mg(2+).

The protein localises to the cell membrane. The catalysed reaction is UDP-N-acetyl-alpha-D-muramoyl-L-alanyl-gamma-D-glutamyl-L-lysyl-D-alanyl-D-alanine + di-trans,octa-cis-undecaprenyl phosphate = Mur2Ac(oyl-L-Ala-gamma-D-Glu-L-Lys-D-Ala-D-Ala)-di-trans,octa-cis-undecaprenyl diphosphate + UMP. It participates in cell wall biogenesis; peptidoglycan biosynthesis. Catalyzes the initial step of the lipid cycle reactions in the biosynthesis of the cell wall peptidoglycan: transfers peptidoglycan precursor phospho-MurNAc-pentapeptide from UDP-MurNAc-pentapeptide onto the lipid carrier undecaprenyl phosphate, yielding undecaprenyl-pyrophosphoryl-MurNAc-pentapeptide, known as lipid I. The protein is Phospho-N-acetylmuramoyl-pentapeptide-transferase of Streptococcus pneumoniae (strain 70585).